The chain runs to 363 residues: Pyrimidine monooxygenase RutA (363 aa).

FMN-binding positions include 49–50, Asn-115, Glu-124, 140–141, and Ser-190; these read IK and RY.

The protein belongs to the NtaA/SnaA/DszA monooxygenase family. RutA subfamily.

The catalysed reaction is uracil + FMNH2 + NADH + O2 = (Z)-3-ureidoacrylate + FMN + NAD(+) + H2O + H(+). It catalyses the reaction thymine + FMNH2 + NADH + O2 = (Z)-2-methylureidoacrylate + FMN + NAD(+) + H2O + H(+). Functionally, catalyzes the pyrimidine ring opening between N-3 and C-4 by an unusual flavin hydroperoxide-catalyzed mechanism, adding oxygen atoms in the process to yield ureidoacrylate peracid, that immediately reacts with FMN forming ureidoacrylate and FMN-N(5)-oxide. The FMN-N(5)-oxide reacts spontaneously with NADH to produce FMN. Requires the flavin reductase RutF to regenerate FMN in vivo. The sequence is that of Pyrimidine monooxygenase RutA from Klebsiella pneumoniae subsp. pneumoniae (strain ATCC 700721 / MGH 78578).